Here is a 433-residue protein sequence, read N- to C-terminus: Pseudopaline synthase (433 aa).

Residues 7–27 form a helical membrane-spanning segment; the sequence is SLGNVLLVGLGAVAIQVALDL. NAD(+) contacts are provided by residues 16 to 19, 39 to 40, and Thr-154; these read LGAV and NH. His-219 (proton donor/acceptor) is an active-site residue. Position 364 (Glu-364) interacts with NAD(+).

This sequence belongs to the staphylopine dehydrogenase family. Homodimer. Interacts with CntL.

The protein resides in the cell membrane. The enzyme catalyses pseudopaline + NAD(+) + H2O = (2S)-2-amino-4-{[(1S)-1-carboxy-2-(1H-imidazol-4-yl)ethyl]amino}butanoate + 2-oxoglutarate + NADH + H(+). In terms of biological role, catalyzes the NADH-dependent reductive condensation of alpha-ketoglutarate to the intermediate formed by the adjacently encoded enzyme CntL, namely (2S)-2-amino-4-{[(1S)-1-carboxy-2-(1H-imidazol-4-yl)ethyl]amino}butanoate, leading to the production of pseudopaline. This is the last step in the biosynthesis of the metallophore pseudopaline, which is involved in the acquisition of nickel and zinc, and thus enables bacterial growth inside the host, where metal access is limited. Therefore, this enzyme probably contributes to Pseudomonas virulence. Can use neither pyruvate nor NADPH in place of alpha-ketoglutarate and NADH, respectively. The protein is Pseudopaline synthase of Pseudomonas aeruginosa (strain UCBPP-PA14).